A 293-amino-acid polypeptide reads, in one-letter code: Amine sulfotransferase (293 aa).

3'-phosphoadenylyl sulfate is bound at residue 46–51 (KSGTIW). His101 (proton acceptor) is an active-site residue. 3'-phosphoadenylyl sulfate contacts are provided by residues Arg123, Ser131, 220 to 225 (ATFQKM), and 252 to 254 (RKG).

The protein belongs to the sulfotransferase 1 family.

Its subcellular location is the cytoplasm. The enzyme catalyses a primary amine + 3'-phosphoadenylyl sulfate = a sulfamate + adenosine 3',5'-bisphosphate + 2 H(+). In terms of biological role, sulfotransferase that utilizes 3'-phospho-5'-adenylyl sulfate (PAPS) as sulfonate donor to catalyze the N-sulfonation of amines. In Mus musculus (Mouse), this protein is Amine sulfotransferase (Sult3a1).